Reading from the N-terminus, the 715-residue chain is Lactococcin-A transport/processing ATP-binding protein LcnC (715 aa).

The region spanning 11–138 (QVDEMDCGCA…SEWTGISLFL (128 aa)) is the Peptidase C39 domain. Cys17 is an active-site residue. Helical transmembrane passes span 167–187 (VILN…LGSY), 197–217 (IPNA…LTYI), 237–257 (LAID…MSFF), 282–302 (TILS…ILGL), 307–327 (LFLL…IFTP), and 396–416 (AIIQ…LVIS). Positions 168 to 450 (ILNIVIASFI…IINLQTKLQK (283 aa)) constitute an ABC transmembrane type-1 domain. Residues 482–715 (LNMSDISYQY…NGFYEQLYHN (234 aa)) form the ABC transporter domain. Residue 515-522 (GMSGSGKS) coordinates ATP.

The protein belongs to the ABC transporter superfamily. Bacteriocin (lactococcin) exporter (TC 3.A.1.112.3) family.

It localises to the cell membrane. Functionally, involved in the export process of the bacteriocin lactococcin A. This Lactococcus lactis subsp. lactis (Streptococcus lactis) protein is Lactococcin-A transport/processing ATP-binding protein LcnC (lcnC).